Consider the following 218-residue polypeptide: Hypoxanthine-guanine phosphoribosyltransferase (218 aa).

Ala2 carries the post-translational modification N-acetylalanine. Residue Lys69 coordinates GMP. Lys103 carries the post-translational modification N6-acetyllysine. Lys115 participates in a covalent cross-link: Glycyl lysine isopeptide (Lys-Gly) (interchain with G-Cter in SUMO1); alternate. Lys115 is covalently cross-linked (Glycyl lysine isopeptide (Lys-Gly) (interchain with G-Cter in SUMO2); alternate). Residues 134-142 (EDIIDTGKT), Lys166, 186-188 (KFV), and Asp194 each bind GMP. Asp138 serves as the catalytic Proton acceptor. Thr142 is modified (phosphothreonine). Asp194 contributes to the Mg(2+) binding site.

Belongs to the purine/pyrimidine phosphoribosyltransferase family. Homotetramer. It depends on Mg(2+) as a cofactor.

It is found in the cytoplasm. The catalysed reaction is IMP + diphosphate = hypoxanthine + 5-phospho-alpha-D-ribose 1-diphosphate. The enzyme catalyses GMP + diphosphate = guanine + 5-phospho-alpha-D-ribose 1-diphosphate. It participates in purine metabolism; IMP biosynthesis via salvage pathway; IMP from hypoxanthine: step 1/1. Functionally, converts guanine to guanosine monophosphate, and hypoxanthine to inosine monophosphate. Transfers the 5-phosphoribosyl group from 5-phosphoribosylpyrophosphate onto the purine. Plays a central role in the generation of purine nucleotides through the purine salvage pathway. The sequence is that of Hypoxanthine-guanine phosphoribosyltransferase (HPRT1) from Cricetulus griseus (Chinese hamster).